Here is a 407-residue protein sequence, read N- to C-terminus: S-adenosylmethionine synthase (407 aa).

An ATP-binding site is contributed by His15. Asp17 contributes to the Mg(2+) binding site. K(+) is bound at residue Glu43. L-methionine contacts are provided by Glu56 and Gln100. A flexible loop region spans residues 100–110 (QSPDIAQGVDE). ATP-binding positions include 171 to 173 (DGK), 248 to 249 (KF), Asp257, 263 to 264 (RK), Ala280, and Lys284. L-methionine is bound at residue Asp257. Residue Lys288 participates in L-methionine binding.

This sequence belongs to the AdoMet synthase family. As to quaternary structure, homotetramer; dimer of dimers. The cofactor is Mg(2+). Requires K(+) as cofactor.

It localises to the cytoplasm. It carries out the reaction L-methionine + ATP + H2O = S-adenosyl-L-methionine + phosphate + diphosphate. Its pathway is amino-acid biosynthesis; S-adenosyl-L-methionine biosynthesis; S-adenosyl-L-methionine from L-methionine: step 1/1. Functionally, catalyzes the formation of S-adenosylmethionine (AdoMet) from methionine and ATP. The overall synthetic reaction is composed of two sequential steps, AdoMet formation and the subsequent tripolyphosphate hydrolysis which occurs prior to release of AdoMet from the enzyme. The polypeptide is S-adenosylmethionine synthase (Synechococcus sp. (strain RCC307)).